Here is a 100-residue protein sequence, read N- to C-terminus: NADH-quinone oxidoreductase subunit K (100 aa).

A run of 3 helical transmembrane segments spans residues 2–22 (ITLSHYLVVAALMFVLGLIGI), 29–49 (IMLFFSSEILLNAANVALAAI), and 63–83 (LFIVAVAASEVAVGLGLLILW).

The protein belongs to the complex I subunit 4L family. NDH-1 is composed of 14 different subunits. Subunits NuoA, H, J, K, L, M, N constitute the membrane sector of the complex.

Its subcellular location is the cell inner membrane. It carries out the reaction a quinone + NADH + 5 H(+)(in) = a quinol + NAD(+) + 4 H(+)(out). In terms of biological role, NDH-1 shuttles electrons from NADH, via FMN and iron-sulfur (Fe-S) centers, to quinones in the respiratory chain. The immediate electron acceptor for the enzyme in this species is believed to be ubiquinone. Couples the redox reaction to proton translocation (for every two electrons transferred, four hydrogen ions are translocated across the cytoplasmic membrane), and thus conserves the redox energy in a proton gradient. The chain is NADH-quinone oxidoreductase subunit K from Campylobacter curvus (strain 525.92).